A 235-amino-acid polypeptide reads, in one-letter code: Probable transcriptional regulatory protein Cj1172c (235 aa).

The protein belongs to the TACO1 family.

The protein resides in the cytoplasm. The sequence is that of Probable transcriptional regulatory protein Cj1172c from Campylobacter jejuni subsp. jejuni serotype O:2 (strain ATCC 700819 / NCTC 11168).